A 94-amino-acid polypeptide reads, in one-letter code: Large ribosomal subunit protein bL25 (94 aa).

Belongs to the bacterial ribosomal protein bL25 family. In terms of assembly, part of the 50S ribosomal subunit; part of the 5S rRNA/L5/L18/L25 subcomplex. Contacts the 5S rRNA. Binds to the 5S rRNA independently of L5 and L18.

This is one of the proteins that binds to the 5S RNA in the ribosome where it forms part of the central protuberance. The polypeptide is Large ribosomal subunit protein bL25 (Shigella boydii serotype 4 (strain Sb227)).